The sequence spans 393 residues: NAD(P)H-quinone oxidoreductase subunit H, chloroplastic (393 aa).

Belongs to the complex I 49 kDa subunit family. As to quaternary structure, NDH is composed of at least 16 different subunits, 5 of which are encoded in the nucleus.

Its subcellular location is the plastid. The protein localises to the chloroplast thylakoid membrane. It carries out the reaction a plastoquinone + NADH + (n+1) H(+)(in) = a plastoquinol + NAD(+) + n H(+)(out). The enzyme catalyses a plastoquinone + NADPH + (n+1) H(+)(in) = a plastoquinol + NADP(+) + n H(+)(out). NDH shuttles electrons from NAD(P)H:plastoquinone, via FMN and iron-sulfur (Fe-S) centers, to quinones in the photosynthetic chain and possibly in a chloroplast respiratory chain. The immediate electron acceptor for the enzyme in this species is believed to be plastoquinone. Couples the redox reaction to proton translocation, and thus conserves the redox energy in a proton gradient. In Lobularia maritima (Sweet alyssum), this protein is NAD(P)H-quinone oxidoreductase subunit H, chloroplastic.